A 133-amino-acid chain; its full sequence is Ribonuclease VapC29 (133 aa).

The region spanning V3 to H122 is the PINc domain. Residues D6 and D97 each coordinate Mg(2+).

The protein belongs to the PINc/VapC protein family. Requires Mg(2+) as cofactor.

Its function is as follows. Toxic component of a type II toxin-antitoxin (TA) system. Its cognate antitoxin is VapB29. Has ribonuclease activity. This chain is Ribonuclease VapC29, found in Mycobacterium tuberculosis (strain CDC 1551 / Oshkosh).